The sequence spans 368 residues: tRNA(Met) cytidine acetate ligase (368 aa).

ATP is bound by residues Ile-7–Leu-20, Gly-96, Asn-152, and Arg-175.

The protein belongs to the TmcAL family.

Its subcellular location is the cytoplasm. It carries out the reaction cytidine(34) in elongator tRNA(Met) + acetate + ATP = N(4)-acetylcytidine(34) in elongator tRNA(Met) + AMP + diphosphate. Its function is as follows. Catalyzes the formation of N(4)-acetylcytidine (ac(4)C) at the wobble position of elongator tRNA(Met), using acetate and ATP as substrates. First activates an acetate ion to form acetyladenylate (Ac-AMP) and then transfers the acetyl group to tRNA to form ac(4)C34. This chain is tRNA(Met) cytidine acetate ligase, found in Streptococcus pyogenes serotype M28 (strain MGAS6180).